A 593-amino-acid chain; its full sequence is Progranulin (593 aa).

The first 17 residues, 1–17, serve as a signal peptide directing secretion; it reads MWTLVSWVALTAGLVAG. N-linked (GlcNAc...) asparagine glycosylation occurs at Asn118. 2 disulfide bridges follow: Cys126/Cys139 and Cys133/Cys149. N-linked (GlcNAc...) asparagine glycosylation is found at Asn236 and Asn265. 10 disulfide bridges follow: Cys284/Cys296, Cys290/Cys306, Cys297/Cys314, Cys307/Cys321, Cys315/Cys328, Cys322/Cys335, Cys366/Cys378, Cys372/Cys388, Cys397/Cys410, and Cys404/Cys416. Residue Asn368 is glycosylated (N-linked (GlcNAc...) asparagine). Asn530 carries N-linked (GlcNAc...) asparagine glycosylation.

Belongs to the granulin family. In terms of assembly, progranulin is secreted as a homodimer. Interacts with SLPI; interaction protects progranulin from proteolysis. Interacts (via region corresponding to granulin-7 peptide) with CTSD; stabilizes CTSD and increases its proteolytic activity. Interacts (via region corresponding to granulin-7 peptide) with SORT1; this interaction mediates endocytosis and lysosome delivery of progranulin; interaction occurs at the neuronal cell surface in a stressed nervous system. Interacts with PSAP; facilitates lysosomal delivery of progranulin from the extracellular space and the biosynthetic pathway. Forms a complex with PSAP and M6PR; PSAP bridges the binding between progranulin and M6PR. Forms a complex with PSAP and SORT1; progranulin bridges the interaction between PSAP and SORT1; facilitates lysosomal targeting of PSAP via SORT1; interaction enhances PSAP uptake in primary cortical neurons. Interacts (via regions corresponding to granulin-2 and granulin-7 peptides) with GBA1; this interaction prevents aggregation of GBA1-SCARB2 complex via interaction with HSPA1A upon stress. Interacts (via region corresponding to granulin-7 peptide) with HSPA1A; mediates recruitment of HSPA1A to GBA1 and prevents GBA1 aggregation in response to stress. In terms of processing, cleaved by ELANE; proteolysis is blocked by SLPI and is concentration- and time-dependent and induces CXCL8/IL-8 production; granulin-3 and granulin-4 are resistant to ELANE. Cleaved by CTSL in lysosome thus regulating the maturation and turnover of progranulin within the lysosome. In terms of tissue distribution, in myelogenous leukemic cell lines of promonocytic, promyelocytic, and proerythroid lineage, in fibroblasts, and very strongly in epithelial cell lines. Present in inflammatory cells and bone marrow. Highest levels in kidney.

It localises to the secreted. The protein resides in the lysosome. Secreted protein that acts as a key regulator of lysosomal function and as a growth factor involved in inflammation, wound healing and cell proliferation. Regulates protein trafficking to lysosomes, and also the activity of lysosomal enzymes. Also facilitates the acidification of lysosomes, causing degradation of mature CTSD by CTSB. In addition, functions as a wound-related growth factor that acts directly on dermal fibroblasts and endothelial cells to promote division, migration and the formation of capillary-like tubule structures. Also promotes epithelial cell proliferation by blocking TNF-mediated neutrophil activation preventing release of oxidants and proteases. Moreover, modulates inflammation in neurons by preserving neurons survival, axonal outgrowth and neuronal integrity. Functionally, promotes proliferation of the epithelial cell line A431 in culture. Its function is as follows. Inhibits epithelial cell proliferation and induces epithelial cells to secrete IL-8. In terms of biological role, stabilizes CTSD through interaction with CTSD leading to maintain its aspartic-type peptidase activity. The protein is Progranulin of Homo sapiens (Human).